A 445-amino-acid chain; its full sequence is Ribosomal protein uS12 methylthiotransferase RimO (445 aa).

In terms of domain architecture, MTTase N-terminal spans 4–119 (IKVALVSLGC…LLESIKVFLK (116 aa)). 6 residues coordinate [4Fe-4S] cluster: Cys-13, Cys-48, Cys-82, Cys-156, Cys-160, and Cys-163. A Radical SAM core domain is found at 142–372 (TTPTYTAYVR…MILQQSISKD (231 aa)). The TRAM domain occupies 375–441 (KEKIGKIYEV…EYDLIGVVYN (67 aa)).

This sequence belongs to the methylthiotransferase family. RimO subfamily. [4Fe-4S] cluster is required as a cofactor.

Its subcellular location is the cytoplasm. It catalyses the reaction L-aspartate(89)-[ribosomal protein uS12]-hydrogen + (sulfur carrier)-SH + AH2 + 2 S-adenosyl-L-methionine = 3-methylsulfanyl-L-aspartate(89)-[ribosomal protein uS12]-hydrogen + (sulfur carrier)-H + 5'-deoxyadenosine + L-methionine + A + S-adenosyl-L-homocysteine + 2 H(+). Functionally, catalyzes the methylthiolation of an aspartic acid residue of ribosomal protein uS12. This chain is Ribosomal protein uS12 methylthiotransferase RimO, found in Clostridium botulinum (strain Loch Maree / Type A3).